The sequence spans 1349 residues: Spike glycoprotein (1349 aa).

Residues 1–13 form the signal peptide; sequence MFFILLITLPSVF. Topologically, residues 14–1293 are extracellular; it reads AVIGDLKCNT…GTYEYYVKWP (1280 aa). In terms of domain architecture, BetaCoV S1-NTD spans 15 to 298; it reads VIGDLKCNTS…DFMSEIMCKT (284 aa). Disulfide bonds link Cys21–Cys165, Cys160–Cys193, Cys172–Cys252, Cys286–Cys296, Cys331–Cys356, Cys374–Cys427, and Cys386–Cys601. Asn22, Asn59, and Asn133 each carry an N-linked (GlcNAc...) asparagine; by host glycan. A glycan (N-linked (GlcNAc...) asparagine; by host) is linked at Asn198. In terms of domain architecture, BetaCoV S1-CTD spans 329 to 603; sequence PNCDIEAWLN…DVNSGTTCST (275 aa). 11 N-linked (GlcNAc...) asparagine; by host glycosylation sites follow: Asn437, Asn456, Asn512, Asn611, Asn635, Asn662, Asn682, Asn700, Asn725, Asn774, and Asn881. 2 fusion peptide regions span residues 900 to 921 and 919 to 939; these read SAIEDLLFDKVKLSDVGFVQAY and QAYNNCTGGAEIRDLICVQSY. A glycan (N-linked (GlcNAc...) asparagine; by host) is linked at Asn923. Residues Cys924 and Cys935 are joined by a disulfide bond. Residues 1000–1050 are heptad repeat 1; the sequence is QKLIASAFNNALDSIQEGFDATNSALVKIQAVVNANAEALNNLLQQLSNRF. The stretch at 1029–1073 forms a coiled coil; that stretch reads QAVVNANAEALNNLLQQLSNRFGAISASLQEILSRLDALEAKAQI. N-linked (GlcNAc...) asparagine; by host glycans are attached at residues Asn1180, Asn1210, Asn1220, Asn1239, Asn1253, and Asn1274. The segment at 1244-1282 is heptad repeat 2; it reads APDLSFDYINVTFLDLQDEMNRLQEAIKVLNHSYINLKD. A coiled-coil region spans residues 1255–1283; the sequence is TFLDLQDEMNRLQEAIKVLNHSYINLKDI. Residues 1294–1314 traverse the membrane as a helical segment; the sequence is WYVWLLICLAGVVMLVLLFFI. Residues 1315–1349 lie on the Cytoplasmic side of the membrane; that stretch reads CCCTGCGTSCFKKCGGCFDDYTGHQEFVIKTSHDD. The KxHxx signature appears at 1345-1349; sequence TSHDD.

It belongs to the betacoronaviruses spike protein family. As to quaternary structure, homotrimer; each monomer consists of a S1 and a S2 subunit. The resulting peplomers protrude from the virus surface as spikes. In terms of processing, specific enzymatic cleavages in vivo yield mature proteins. The precursor is processed into S1 and S2 by host cell furin or another cellular protease to yield the mature S1 and S2 proteins. Additionally, a second cleavage leads to the release of a fusion peptide after viral attachment to host cell receptor. The cytoplasmic Cys-rich domain is palmitoylated. Spike glycoprotein is digested within host endosomes.

It localises to the virion membrane. The protein resides in the host endoplasmic reticulum-Golgi intermediate compartment membrane. It is found in the host cell membrane. Functionally, attaches the virion to the cell membrane by interacting with host receptor, initiating the infection. Mediates fusion of the virion and cellular membranes by acting as a class I viral fusion protein. Under the current model, the protein has at least three conformational states: pre-fusion native state, pre-hairpin intermediate state, and post-fusion hairpin state. During viral and target cell membrane fusion, the coiled coil regions (heptad repeats) assume a trimer-of-hairpins structure, positioning the fusion peptide in close proximity to the C-terminal region of the ectodomain. The formation of this structure appears to drive apposition and subsequent fusion of viral and target cell membranes. In terms of biological role, acts as a viral fusion peptide which is unmasked following S2 cleavage occurring upon virus endocytosis. The protein is Spike glycoprotein of Porcine hemagglutinating encephalomyelitis virus (strain IAF-404) (HEV).